The sequence spans 200 residues: Protein GrpE (200 aa).

The segment covering 1 to 12 (MSNEEIKNKDEQ) has biased composition (basic and acidic residues). The disordered stretch occupies residues 1–30 (MSNEEIKNKDEQLQQDAVETEAEVVGTDAD).

This sequence belongs to the GrpE family. Homodimer.

It is found in the cytoplasm. In terms of biological role, participates actively in the response to hyperosmotic and heat shock by preventing the aggregation of stress-denatured proteins, in association with DnaK and GrpE. It is the nucleotide exchange factor for DnaK and may function as a thermosensor. Unfolded proteins bind initially to DnaJ; upon interaction with the DnaJ-bound protein, DnaK hydrolyzes its bound ATP, resulting in the formation of a stable complex. GrpE releases ADP from DnaK; ATP binding to DnaK triggers the release of the substrate protein, thus completing the reaction cycle. Several rounds of ATP-dependent interactions between DnaJ, DnaK and GrpE are required for fully efficient folding. The protein is Protein GrpE of Vibrio cholerae serotype O1 (strain ATCC 39315 / El Tor Inaba N16961).